We begin with the raw amino-acid sequence, 104 residues long: Large ribosomal subunit protein uL24 (104 aa).

Belongs to the universal ribosomal protein uL24 family. Part of the 50S ribosomal subunit.

In terms of biological role, one of two assembly initiator proteins, it binds directly to the 5'-end of the 23S rRNA, where it nucleates assembly of the 50S subunit. One of the proteins that surrounds the polypeptide exit tunnel on the outside of the subunit. This is Large ribosomal subunit protein uL24 from Clostridium perfringens (strain ATCC 13124 / DSM 756 / JCM 1290 / NCIMB 6125 / NCTC 8237 / Type A).